Reading from the N-terminus, the 717-residue chain is Fatty acid oxidation complex subunit alpha (717 aa).

The tract at residues 1 to 190 (MIHAGNAITV…KDGAVDAVVA (190 aa)) is enoyl-CoA hydratase/isomerase. Asp-298 is a binding site for substrate. The segment at 313–717 (HPVNQAAVLG…MAANNKKFYG (405 aa)) is 3-hydroxyacyl-CoA dehydrogenase. NAD(+)-binding positions include Met-326, Asp-345, 402 to 404 (VTE), Lys-409, and Ser-431. His-452 serves as the catalytic For 3-hydroxyacyl-CoA dehydrogenase activity. Asn-455 contributes to the NAD(+) binding site. Position 502 (Asn-502) interacts with substrate.

It in the N-terminal section; belongs to the enoyl-CoA hydratase/isomerase family. The protein in the C-terminal section; belongs to the 3-hydroxyacyl-CoA dehydrogenase family. In terms of assembly, heterotetramer of two alpha chains (FadB) and two beta chains (FadA).

It catalyses the reaction a (3S)-3-hydroxyacyl-CoA + NAD(+) = a 3-oxoacyl-CoA + NADH + H(+). It carries out the reaction a (3S)-3-hydroxyacyl-CoA = a (2E)-enoyl-CoA + H2O. The catalysed reaction is a 4-saturated-(3S)-3-hydroxyacyl-CoA = a (3E)-enoyl-CoA + H2O. The enzyme catalyses (3S)-3-hydroxybutanoyl-CoA = (3R)-3-hydroxybutanoyl-CoA. It catalyses the reaction a (3Z)-enoyl-CoA = a 4-saturated (2E)-enoyl-CoA. It carries out the reaction a (3E)-enoyl-CoA = a 4-saturated (2E)-enoyl-CoA. The protein operates within lipid metabolism; fatty acid beta-oxidation. In terms of biological role, involved in the aerobic and anaerobic degradation of long-chain fatty acids via beta-oxidation cycle. Catalyzes the formation of 3-oxoacyl-CoA from enoyl-CoA via L-3-hydroxyacyl-CoA. It can also use D-3-hydroxyacyl-CoA and cis-3-enoyl-CoA as substrate. The chain is Fatty acid oxidation complex subunit alpha from Acinetobacter baumannii (strain ACICU).